Here is a 280-residue protein sequence, read N- to C-terminus: Ribulose-phosphate 3-epimerase, chloroplastic (280 aa).

A chloroplast-targeting transit peptide spans 1–45; it reads SLGSSTLLQSQISGFGGSQKLQKISFSNPNSLTFTRRRIQTVVNA. Ser-62 is a substrate binding site. A divalent metal cation-binding residues include His-87, Asp-89, and His-120. Asp-89 acts as the Proton acceptor in catalysis. Substrate is bound by residues His-120, 198-201, 231-233, and 253-254; these read GFGG, DGG, and GS. Asp-231 lines the a divalent metal cation pocket. Asp-231 functions as the Proton donor in the catalytic mechanism.

It belongs to the ribulose-phosphate 3-epimerase family. As to quaternary structure, homohexamer. Requires Co(2+) as cofactor. Fe(2+) is required as a cofactor. It depends on Mn(2+) as a cofactor. The cofactor is Zn(2+). Highest level of expression in leaves, whereas it is low in roots, tubers, and stems.

It localises to the plastid. The protein localises to the chloroplast thylakoid membrane. It catalyses the reaction D-ribulose 5-phosphate = D-xylulose 5-phosphate. The protein operates within carbohydrate biosynthesis; Calvin cycle. Its function is as follows. Catalyzes the reversible epimerization of D-ribulose 5-phosphate to D-xylulose 5-phosphate. The polypeptide is Ribulose-phosphate 3-epimerase, chloroplastic (Solanum tuberosum (Potato)).